Here is a 391-residue protein sequence, read N- to C-terminus: Terminal nucleotidyltransferase 5C (391 aa).

It belongs to the TENT family. Interacts with BCCIP and PABPC1; the interaction has no effect on TENT5C poly(A) polymerase function. Interacts with PLK4; this interaction leads to the TENT5C recruitment into the centrosome.

It localises to the nucleus. The protein localises to the cytoplasm. Its subcellular location is the cytoskeleton. The protein resides in the microtubule organizing center. It is found in the centrosome. It catalyses the reaction RNA(n) + ATP = RNA(n)-3'-adenine ribonucleotide + diphosphate. In terms of biological role, catalyzes the transfer of one adenosine molecule from an ATP to an mRNA poly(A) tail bearing a 3'-OH terminal group and enhances mRNA stability and gene expression. Can also elongate RNA oligos ending with uridine molecule, provided that the sequence is adenosine-rich. Mainly targets mRNAs encoding endoplasmic reticulum-targeted protein. The protein is Terminal nucleotidyltransferase 5C of Rattus norvegicus (Rat).